The primary structure comprises 493 residues: uncharacterized protein (493 aa).

The chain crosses the membrane as a helical span at residues 10 to 30 (LVPSTRFALSLVMFFGCLVTY). Residues N35, N47, and N69 are each glycosylated (N-linked (GlcNAc...) asparagine). Transmembrane regions (helical) follow at residues 85–105 (MVLSSFFYGYIGSQIIGGHLA), 112–132 (RVVFVTILGSALLTLLNPVAA), 144–164 (AAIGFLQGATFPAMHTMWSVW), 175–195 (GVTYAGAQIGNVIVLPLSGFL), 205–225 (PSIFYIIGVFGVLWTAVWWYV), and 272–292 (AVWACWAGHFAGDWGAYTMLV). N305 carries an N-linked (GlcNAc...) asparagine glycan. 4 helical membrane passes run 311–331 (AVASIPYIAYFLAINAGGVLA), 348–368 (AAMLVALIGQGIFLVASGYCG), 375–395 (VIIFITCGMAISGLQYAGFVV), and 406–426 (GTVMGTGNTISALAGIISPAV). N433 carries an N-linked (GlcNAc...) asparagine glycan. Residues 441–461 (MVLWLTAGILTIGALLFSIFA) traverse the membrane as a helical segment.

Belongs to the major facilitator superfamily. Sodium/anion cotransporter family.

It is found in the membrane. This is an uncharacterized protein from Caenorhabditis elegans.